The sequence spans 263 residues: uncharacterized protein (263 aa).

This sequence belongs to the AtsA family.

It is found in the plastid. It localises to the chloroplast. This is an uncharacterized protein from Pyropia yezoensis (Susabi-nori).